We begin with the raw amino-acid sequence, 201 residues long: FMN-dependent NADH:quinone oxidoreductase (201 aa).

Residues serine 9 and 93–96 (MYNF) each bind FMN.

The protein belongs to the azoreductase type 1 family. Homodimer. The cofactor is FMN.

It catalyses the reaction 2 a quinone + NADH + H(+) = 2 a 1,4-benzosemiquinone + NAD(+). The catalysed reaction is N,N-dimethyl-1,4-phenylenediamine + anthranilate + 2 NAD(+) = 2-(4-dimethylaminophenyl)diazenylbenzoate + 2 NADH + 2 H(+). Quinone reductase that provides resistance to thiol-specific stress caused by electrophilic quinones. Functionally, also exhibits azoreductase activity. Catalyzes the reductive cleavage of the azo bond in aromatic azo compounds to the corresponding amines. This Bradyrhizobium sp. (strain BTAi1 / ATCC BAA-1182) protein is FMN-dependent NADH:quinone oxidoreductase.